The following is a 552-amino-acid chain: uncharacterized protein (552 aa).

Transmembrane regions (helical) follow at residues 127 to 147 (AIML…ISLL), 160 to 180 (LIIV…YINI), 393 to 413 (LTKQ…LSAV), and 517 to 537 (VIDS…FICI).

The protein resides in the membrane. This is an uncharacterized protein from Saccharomyces cerevisiae (strain ATCC 204508 / S288c) (Baker's yeast).